The sequence spans 232 residues: Putative B3 domain-containing protein Os11g0242900 (232 aa).

A DNA-binding region (TF-B3 1) is located at residues Met-1–Lys-51. The segment at Ser-92–Thr-121 is disordered. Residues Ser-95–Ser-107 show a composition bias toward basic and acidic residues. Positions Met-108–Thr-121 are enriched in polar residues. A DNA-binding region (TF-B3 2) is located at residues Asp-140 to Leu-232.

It localises to the nucleus. This is Putative B3 domain-containing protein Os11g0242900 from Oryza sativa subsp. japonica (Rice).